Here is a 141-residue protein sequence, read N- to C-terminus: UPF0102 protein BRADO0179 (141 aa).

A disordered region spans residues 1–24 (MAETDRATDKPAGAPKPAKTASPE). Over residues 10 to 19 (KPAGAPKPAK) the composition is skewed to low complexity.

It belongs to the UPF0102 family.

This is UPF0102 protein BRADO0179 from Bradyrhizobium sp. (strain ORS 278).